We begin with the raw amino-acid sequence, 205 residues long: Outer-membrane lipoprotein carrier protein (205 aa).

The signal sequence occupies residues 1-19; it reads MKKIIICFIFVFSINISFA.

This sequence belongs to the LolA family. As to quaternary structure, monomer.

The protein localises to the periplasm. Its function is as follows. Participates in the translocation of lipoproteins from the inner membrane to the outer membrane. Only forms a complex with a lipoprotein if the residue after the N-terminal Cys is not an aspartate (The Asp acts as a targeting signal to indicate that the lipoprotein should stay in the inner membrane). This is Outer-membrane lipoprotein carrier protein from Francisella tularensis subsp. novicida (strain U112).